Reading from the N-terminus, the 73-residue chain is Translation initiation factor IF-1 (73 aa).

The S1-like domain occupies 1–73 (MANKEELIEF…SKGRITYRAR (73 aa)).

The protein belongs to the IF-1 family. Component of the 30S ribosomal translation pre-initiation complex which assembles on the 30S ribosome in the order IF-2 and IF-3, IF-1 and N-formylmethionyl-tRNA(fMet); mRNA recruitment can occur at any time during PIC assembly.

It is found in the cytoplasm. In terms of biological role, one of the essential components for the initiation of protein synthesis. Stabilizes the binding of IF-2 and IF-3 on the 30S subunit to which N-formylmethionyl-tRNA(fMet) subsequently binds. Helps modulate mRNA selection, yielding the 30S pre-initiation complex (PIC). Upon addition of the 50S ribosomal subunit IF-1, IF-2 and IF-3 are released leaving the mature 70S translation initiation complex. This Acinetobacter baylyi (strain ATCC 33305 / BD413 / ADP1) protein is Translation initiation factor IF-1.